The chain runs to 346 residues: GPALPP motifs-containing protein 1 (346 aa).

2 disordered regions span residues 1–283 (MARD…ESLM) and 289–308 (KLKS…IPFD). Alanine 2 carries the N-acetylalanine modification. Positions 7–12 (GPALPP) match the GPALPP motif 1 motif. Phosphoserine is present on serine 28. Residues 32-37 (GPALPP) carry the GPALPP motif 2 motif. Acidic residues predominate over residues 60–69 (GNQESEEEDT). The short motif at 91–96 (GPALPP) is the GPALPP motif 3 element. At serine 104 the chain carries Phosphoserine. Residues 106–115 (PRPIIGPALP) are compositionally biased toward pro residues. Residues 111 to 116 (GPALPP) carry the GPALPP motif 4 motif. Residues 123–132 (QKNDKGREDP) are compositionally biased toward basic and acidic residues. Phosphoserine occurs at positions 136, 141, and 146. Positions 142-152 (EEAESGEDEDI) are enriched in acidic residues. Basic and acidic residues-rich tracts occupy residues 169–193 (EFEK…KPIT) and 233–267 (PADR…KRLA). Residue lysine 277 forms a Glycyl lysine isopeptide (Lys-Gly) (interchain with G-Cter in SUMO2) linkage. The segment covering 293–308 (KAAEDKNKHQERIPFD) has biased composition (basic and acidic residues). Lysine 314 is covalently cross-linked (Glycyl lysine isopeptide (Lys-Gly) (interchain with G-Cter in SUMO2)).

This Mus musculus (Mouse) protein is GPALPP motifs-containing protein 1 (Gpalpp1).